Consider the following 118-residue polypeptide: Small ribosomal subunit protein uS13 (118 aa).

Positions 94–118 (GLPVRGQRTKTNARTRKGPRKPIKK) are disordered.

This sequence belongs to the universal ribosomal protein uS13 family. As to quaternary structure, part of the 30S ribosomal subunit. Forms a loose heterodimer with protein S19. Forms two bridges to the 50S subunit in the 70S ribosome.

Functionally, located at the top of the head of the 30S subunit, it contacts several helices of the 16S rRNA. In the 70S ribosome it contacts the 23S rRNA (bridge B1a) and protein L5 of the 50S subunit (bridge B1b), connecting the 2 subunits; these bridges are implicated in subunit movement. Contacts the tRNAs in the A and P-sites. This chain is Small ribosomal subunit protein uS13, found in Mannheimia succiniciproducens (strain KCTC 0769BP / MBEL55E).